Consider the following 1358-residue polypeptide: MSEFHRLYFDELLFDFPDLVKVQKDSYASFVGGGDTVFSISDIFASVFPVNDGYGRASLEFVSCRMGEPKHDEYGCVERGITYSAPLRAILRLVVFGDETSGEGSEGVSTEPAVKDVREQEIYMGDIPIMSKNGTFIINGVERVVVSQMHRAPGVFFDNDKARSISGKLNYIARIIPYRGSWLDFEFDAKDVLYFRIDKKRKLPVTFLLRALGLSNKDIFAQFCEVSECRLTKDGKWTVCFVPEKFKGVRLQYDLINAETGELVLAKGNRISIVLARNLYAKGLRYCYMDLEVMKDMYLADDLVSTKGEVLLPHGTKLTKEHVAKLEFLDVDSIKLVELKGNYVFSTVLQYDCSYEEAMLSIYRVVRPGEIPSVESAEKLFESLFFSPERYDLLNVGRIRLNAKFNLSHDESLTVLTKEDIFCTVKELALLQREVGDVDDIDHLGNRRVRSVGEFMDNQFRIGLVRMAKVIVENMATADFDTVMPCEMINSKILGAVIREFFMSSALSQFMDQTNPLSEITHKRRISALGPGGLNRGRAGFEVRDVHTTHYGRICATETPEGATIGLINSLAIYAKINKYGFIETPYRYVRDGRVTDEVTYLSAIDEIKANICQASVRVDEEGYIVDDLVYCRRNYENVFIPRSEVQFADVSAKQIVSVAASLIPFLENDDANRALMGSNMQRQAVPLIMPEAPLVGTGMEGYVARGSGAVIVAKRAGVVQYIDARNIVVASESKDDFWIDSYTLCKFRKSNHNTCIHQRCVVHQGQRVKKGDILADGPAIQKGELALGRNLVVAFLSWRGYNFEDSVVISSNVVRDDLFTSVHLEGFECVVRDTRLGPEEITRDVSGVAEEFLHCLDEFGIACVGANVEAGDVLVGKVTPKSSSPVTPEEKLLRAIFGEKAIDVKDSSLYLPPGVSGCVVDVKVLQRRGIEKVGRALLIEKQAIDAEKTRRDHELAVLTNYIYSLLKEMLVGKVALSTLAPISKGDLITEEALEKIDRENWWKISVDGISSIKLLRQRFVDRFDEINKTYEENFEKIRGDDDLAQGVLMVVKVFVAVKHTLQPGDKMSGRHGNKGVISRIVPAEDMPYLADGTPVDIILNPLGVPSRMNVGQILETHLGWAAYNLGKKISKLLDEGNYSEVKSLVLEIYKNDRKMMARLNEMTDAEIVEYSRSLRGGVPVAASVFEGPKTDEIERLLVLAGKDPSGQEVLYDGVTGEKFDRKVTVGCKYMLKLHHLVNDKIHARSIGSYSLITQQPLGGKSHFGGQRFGEMECWALQAYGATFALQEMLTIKSDDVVGRVNVYDSIVRGDNDFYYGVPESFNVMMNELRALCLNVEFCSDLEKKKDFGDLALAASGQ.

This sequence belongs to the RNA polymerase beta chain family. In terms of assembly, the RNAP catalytic core consists of 2 alpha, 1 beta, 1 beta' and 1 omega subunit. When a sigma factor is associated with the core the holoenzyme is formed, which can initiate transcription.

It catalyses the reaction RNA(n) + a ribonucleoside 5'-triphosphate = RNA(n+1) + diphosphate. DNA-dependent RNA polymerase catalyzes the transcription of DNA into RNA using the four ribonucleoside triphosphates as substrates. This chain is DNA-directed RNA polymerase subunit beta, found in Neorickettsia sennetsu (strain ATCC VR-367 / Miyayama) (Ehrlichia sennetsu).